Reading from the N-terminus, the 31-residue chain is Cyclotide vibi-H (31 aa).

Residues 1-31 (GLLPCAESCVYIPCLTTVIGCSCKSKVCYKN) constitute a cross-link (cyclopeptide (Gly-Asn)). Intrachain disulfides connect cysteine 5/cysteine 21, cysteine 9/cysteine 23, and cysteine 14/cysteine 28.

This is a cyclic peptide.

In terms of biological role, probably participates in a plant defense mechanism. Has cytotoxic activity, active against a human lymphoma cell line with an IC(50) of 1.6 uM. The protein is Cyclotide vibi-H of Viola biflora (Yellow wood violet).